Here is a 481-residue protein sequence, read N- to C-terminus: Probable zeta-carotene desaturase (481 aa).

This sequence belongs to the zeta carotene desaturase family. Requires decylplastoquinone as cofactor. It depends on 6-decylubiquinone as a cofactor.

It carries out the reaction 9,9'-di-cis-zeta-carotene + 2 a quinone = 7,7',9,9'-tetra-cis-lycopene + 2 a quinol. The protein operates within carotenoid biosynthesis; lycopene biosynthesis. Its function is as follows. Catalyzes the conversion of zeta-carotene to lycopene via the intermediary of neurosporene. It carries out two consecutive desaturations (introduction of double bonds) at positions C-7 and C-7'. The sequence is that of Probable zeta-carotene desaturase (zds) from Synechococcus elongatus (strain ATCC 33912 / PCC 7942 / FACHB-805) (Anacystis nidulans R2).